The chain runs to 223 residues: MLDRDGFRPNVGIILLNQRNQVFWGKRIRTHSWQFPQGGIDRGESPEQAMFRELHEEVGLHPEHVRIVARTRDWLRYEVPDRFIRRDARGHYKGQKQIWYLLQLIGHDWDLNLRATDHPEFDAWRWHDYWVPLDVVVEFKRGVYEMALTELARYLPRQDFRNRFLRSNVRAREFERHMPDGGAPAGLDLPPGGSFDPHPDITSASDDPSPPPHNKAPFLPSQR.

A Nudix hydrolase domain is found at 6-149 (GFRPNVGIIL…KRGVYEMALT (144 aa)). The short motif at 38-59 (GGIDRGESPEQAMFRELHEEVG) is the Nudix box element. The disordered stretch occupies residues 175 to 223 (ERHMPDGGAPAGLDLPPGGSFDPHPDITSASDDPSPPPHNKAPFLPSQR). A compositionally biased stretch (low complexity) spans 180 to 193 (DGGAPAGLDLPPGG).

This sequence belongs to the Nudix hydrolase family. RppH subfamily. A divalent metal cation is required as a cofactor.

Accelerates the degradation of transcripts by removing pyrophosphate from the 5'-end of triphosphorylated RNA, leading to a more labile monophosphorylated state that can stimulate subsequent ribonuclease cleavage. The chain is RNA pyrophosphohydrolase from Variovorax paradoxus (strain S110).